We begin with the raw amino-acid sequence, 506 residues long: Histidine ammonia-lyase (506 aa).

Positions 144 to 146 form a cross-link, 5-imidazolinone (Ala-Gly); that stretch reads ASG. S145 carries the 2,3-didehydroalanine (Ser) modification.

Belongs to the PAL/histidase family. In terms of processing, contains an active site 4-methylidene-imidazol-5-one (MIO), which is formed autocatalytically by cyclization and dehydration of residues Ala-Ser-Gly.

It localises to the cytoplasm. The enzyme catalyses L-histidine = trans-urocanate + NH4(+). The protein operates within amino-acid degradation; L-histidine degradation into L-glutamate; N-formimidoyl-L-glutamate from L-histidine: step 1/3. In Legionella pneumophila (strain Paris), this protein is Histidine ammonia-lyase.